The primary structure comprises 66 residues: Potassium channel toxin alpha-KTx 30.1 (66 aa).

An N-terminal signal peptide occupies residues Met-1–Ala-24. Cystine bridges form between Cys-30/Cys-50, Cys-36/Cys-55, and Cys-40/Cys-57.

The protein belongs to the short scorpion toxin superfamily. Potassium channel inhibitor family. Alpha-KTx 30 subfamily. Expressed by the venom gland.

The protein localises to the secreted. Inhibits Kv1.3/KCNA3 channel (1 uM of the toxin inhibits currents by 64.1%). The polypeptide is Potassium channel toxin alpha-KTx 30.1 (Scorpiops margerisonae (Scorpion)).